The following is a 128-amino-acid chain: MAPVKKLVAKGGKKKKQVLKFTLDCTHPVEDGIMDAANFEQFLQERIKVNGKAGNLGGGVVTIERSKSKITVTSEVPFSKRYLKYLTKKYLKKNNLRDWLRVVANSKESYELRYFQINQDEEEEEDED.

Threonine 62 is modified (phosphothreonine). At serine 66 the chain carries Phosphoserine. Residue lysine 69 is modified to N6-succinyllysine.

This sequence belongs to the eukaryotic ribosomal protein eL22 family. Component of the large ribosomal subunit.

The protein localises to the cytoplasm. Its function is as follows. Component of the large ribosomal subunit. The ribosome is a large ribonucleoprotein complex responsible for the synthesis of proteins in the cell. This is Large ribosomal subunit protein eL22 (RPL22) from Sus scrofa (Pig).